Reading from the N-terminus, the 360-residue chain is 3-dehydroquinate synthase (360 aa).

NAD(+) contacts are provided by residues 71 to 76 (DGEQYK), 105 to 109 (GVVGD), 129 to 130 (TT), lysine 142, lysine 151, and 169 to 172 (TLNT). 3 residues coordinate Zn(2+): glutamate 184, histidine 248, and histidine 265.

Belongs to the sugar phosphate cyclases superfamily. Dehydroquinate synthase family. Requires Co(2+) as cofactor. Zn(2+) is required as a cofactor. It depends on NAD(+) as a cofactor.

Its subcellular location is the cytoplasm. The enzyme catalyses 7-phospho-2-dehydro-3-deoxy-D-arabino-heptonate = 3-dehydroquinate + phosphate. Its pathway is metabolic intermediate biosynthesis; chorismate biosynthesis; chorismate from D-erythrose 4-phosphate and phosphoenolpyruvate: step 2/7. Catalyzes the conversion of 3-deoxy-D-arabino-heptulosonate 7-phosphate (DAHP) to dehydroquinate (DHQ). The chain is 3-dehydroquinate synthase from Coxiella burnetii (strain CbuG_Q212) (Coxiella burnetii (strain Q212)).